An 89-amino-acid polypeptide reads, in one-letter code: Large ribosomal subunit protein bL27 (89 aa).

The tract at residues 1 to 20 is disordered; that stretch reads MAHKKAGGSSRNGRDSAGRR.

This sequence belongs to the bacterial ribosomal protein bL27 family.

In Zymomonas mobilis subsp. mobilis (strain ATCC 31821 / ZM4 / CP4), this protein is Large ribosomal subunit protein bL27.